The chain runs to 495 residues: Cobyric acid synthase (495 aa).

One can recognise a GATase cobBQ-type domain in the interval 252–440; sequence RPKVVVLAYP…VHGLFADDGL (189 aa). Residue cysteine 334 is the Nucleophile of the active site. Histidine 432 is a catalytic residue.

This sequence belongs to the CobB/CobQ family. CobQ subfamily.

Its pathway is cofactor biosynthesis; adenosylcobalamin biosynthesis. Its function is as follows. Catalyzes amidations at positions B, D, E, and G on adenosylcobyrinic A,C-diamide. NH(2) groups are provided by glutamine, and one molecule of ATP is hydrogenolyzed for each amidation. The polypeptide is Cobyric acid synthase (Bradyrhizobium sp. (strain ORS 278)).